A 460-amino-acid polypeptide reads, in one-letter code: Dihydroorotate dehydrogenase (quinone), mitochondrial (460 aa).

The N-terminal 32 residues, Met1–Cys32, are a transit peptide targeting the mitochondrion. A helical membrane pass occupies residues Ile53–Val69. FMN is bound by residues Ala141 to Lys145 and Ser165. Lys145 contacts substrate. Asn190 to Phe194 is a binding site for substrate. The tract at residues Arg213–Gly245 is disordered. FMN-binding residues include Asn243 and Asn274. Substrate is bound at residue Asn274 to Asn279. Residue Ser277 is the Nucleophile of the active site. 2 residues coordinate FMN: Lys319 and Ser347. Asn348 to Thr349 lines the substrate pocket. Residues Gly371, Gly400, and Tyr421–Thr422 each bind FMN.

The protein belongs to the dihydroorotate dehydrogenase family. Type 2 subfamily. The cofactor is FMN.

Its subcellular location is the mitochondrion inner membrane. It carries out the reaction (S)-dihydroorotate + a quinone = orotate + a quinol. It participates in pyrimidine metabolism; UMP biosynthesis via de novo pathway; orotate from (S)-dihydroorotate (quinone route): step 1/1. Functionally, catalyzes the conversion of dihydroorotate to orotate with quinone as electron acceptor. The sequence is that of Dihydroorotate dehydrogenase (quinone), mitochondrial (PYRD) from Arabidopsis thaliana (Mouse-ear cress).